A 498-amino-acid chain; its full sequence is Glycerol kinase (498 aa).

Thr12 is an ADP binding site. Residues Thr12, Thr13, and Ser14 each contribute to the ATP site. Thr12 is a sn-glycerol 3-phosphate binding site. ADP is bound at residue Arg16. The sn-glycerol 3-phosphate site is built by Arg82, Glu83, Tyr134, and Asp243. Residues Arg82, Glu83, Tyr134, Asp243, and Gln244 each contribute to the glycerol site. 2 residues coordinate ADP: Thr265 and Gly308. 4 residues coordinate ATP: Thr265, Gly308, Gln312, and Gly409. Gly409 and Asn413 together coordinate ADP.

This sequence belongs to the FGGY kinase family. Homotetramer and homodimer (in equilibrium).

The enzyme catalyses glycerol + ATP = sn-glycerol 3-phosphate + ADP + H(+). The protein operates within polyol metabolism; glycerol degradation via glycerol kinase pathway; sn-glycerol 3-phosphate from glycerol: step 1/1. Activated by phosphorylation and inhibited by fructose 1,6-bisphosphate (FBP). Functionally, key enzyme in the regulation of glycerol uptake and metabolism. Catalyzes the phosphorylation of glycerol to yield sn-glycerol 3-phosphate. The polypeptide is Glycerol kinase (Clostridium botulinum (strain Okra / Type B1)).